A 719-amino-acid polypeptide reads, in one-letter code: DIVEKDPVKTSFERWAQPGHFSKNLAKGPSTTTWIWNLHADAHDFDSHTNDLEDISRKIFGAHFGQLAIIFIWLSGMYFHGARFSNYEAWLNDPTHVKPSAQVVWPIVGQEILNGDVGGGFQGIQITSGFFQLWRASGITNELQLYCTAVGALIFAGLMFFAGWFHYHKAAPKLAWFQNVESMLNHHLAGLLGLGSLGWAGHQIHVSLPINQLLDAGVDSKEVPLPHEFILNREILTQAYPSFAKGLIPFFTLDWSEYSDFLTFRGGLNPVTGGLWLTDTAHHHLAIAVLFLVAGHMYRTNWGIGHSTREILEAHKGPFTGEGHKGLYEILTSSWHAQLAINLAMLGSLTIIVSHHMYAMPPYPYLATDYATQLSLFTHHMWIGGFLVVGAAAHAAIFMVRDYDPTTQYNNLLDRVIRHRDAIISHLNWVCIFLGFHSFGLYIHNDTMSALGRPQDMFSDTAIQLQPIFAQWVQNTHALAPGSTAPNAAAATSLTWGGSNLVAVGGKIAISPITLGTADFLVHHIHAFTIHVTVLILLKGVLFARSSRLIPDKANLGFRFPCDGPGRGGTCQVSAWDHVFLGLFWMYNSISVVIFHFSWKMQSDVWGSISEQGVINHITGGNFAQSSTTINGWLRDFLWAQASQVIQSYGSSLSAYGLLFLGAHFVWAFSLMFLFSGRGYWQELIESIVWAHNKLKVAPVTQPRALSIIQGRAVGVTHT.

The next 8 membrane-spanning stretches (helical) occupy residues 59 to 82, 145 to 168, 184 to 208, 280 to 298, 335 to 358, 374 to 400, 422 to 444, and 520 to 538; these read IFGA…FHGA, LYCT…FHYH, LNHH…HVSL, TAHH…GHMY, WHAQ…HHMY, LSLF…IFMV, AIIS…LYIH, and FLVH…LILL. 2 residues coordinate [4Fe-4S] cluster: Cys562 and Cys571. 2 helical membrane-spanning segments follow: residues 578 to 599 and 653 to 675; these read HVFL…HFSW and LSAY…MFLF. His664 is a chlorophyll a' binding site. Met672 and Tyr680 together coordinate chlorophyll a. Trp681 provides a ligand contact to phylloquinone. A helical transmembrane segment spans residues 713–719; it reads AVGVTHT.

The protein belongs to the PsaA/PsaB family. In terms of assembly, the PsaA/B heterodimer binds the P700 chlorophyll special pair and subsequent electron acceptors. PSI consists of a core antenna complex that captures photons, and an electron transfer chain that converts photonic excitation into a charge separation. The eukaryotic PSI reaction center is composed of at least 11 subunits. P700 is a chlorophyll a/chlorophyll a' dimer, A0 is one or more chlorophyll a, A1 is one or both phylloquinones and FX is a shared 4Fe-4S iron-sulfur center. is required as a cofactor.

It localises to the plastid. The protein localises to the chloroplast thylakoid membrane. The enzyme catalyses reduced [plastocyanin] + hnu + oxidized [2Fe-2S]-[ferredoxin] = oxidized [plastocyanin] + reduced [2Fe-2S]-[ferredoxin]. PsaA and PsaB bind P700, the primary electron donor of photosystem I (PSI), as well as the electron acceptors A0, A1 and FX. PSI is a plastocyanin-ferredoxin oxidoreductase, converting photonic excitation into a charge separation, which transfers an electron from the donor P700 chlorophyll pair to the spectroscopically characterized acceptors A0, A1, FX, FA and FB in turn. Oxidized P700 is reduced on the lumenal side of the thylakoid membrane by plastocyanin. The sequence is that of Photosystem I P700 chlorophyll a apoprotein A1 from Asplenium nidus (Bird's nest fern).